The chain runs to 306 residues: UDP-3-O-acyl-N-acetylglucosamine deacetylase (306 aa).

3 residues coordinate Zn(2+): histidine 79, histidine 238, and aspartate 242. The active-site Proton donor is histidine 265.

The protein belongs to the LpxC family. Zn(2+) serves as cofactor.

The catalysed reaction is a UDP-3-O-[(3R)-3-hydroxyacyl]-N-acetyl-alpha-D-glucosamine + H2O = a UDP-3-O-[(3R)-3-hydroxyacyl]-alpha-D-glucosamine + acetate. It participates in glycolipid biosynthesis; lipid IV(A) biosynthesis; lipid IV(A) from (3R)-3-hydroxytetradecanoyl-[acyl-carrier-protein] and UDP-N-acetyl-alpha-D-glucosamine: step 2/6. Functionally, catalyzes the hydrolysis of UDP-3-O-myristoyl-N-acetylglucosamine to form UDP-3-O-myristoylglucosamine and acetate, the committed step in lipid A biosynthesis. This Shewanella oneidensis (strain ATCC 700550 / JCM 31522 / CIP 106686 / LMG 19005 / NCIMB 14063 / MR-1) protein is UDP-3-O-acyl-N-acetylglucosamine deacetylase.